Consider the following 60-residue polypeptide: MIFMILTKFEKARIIGARALQIAMGAPVIIDISPDIIDPIDIAMIEFENNVIPITIKRNQ.

The protein belongs to the archaeal Rpo6/eukaryotic RPB6 RNA polymerase subunit family. Part of the RNA polymerase complex.

Its subcellular location is the cytoplasm. The catalysed reaction is RNA(n) + a ribonucleoside 5'-triphosphate = RNA(n+1) + diphosphate. Functionally, DNA-dependent RNA polymerase (RNAP) catalyzes the transcription of DNA into RNA using the four ribonucleoside triphosphates as substrates. The polypeptide is DNA-directed RNA polymerase subunit Rpo6 (Picrophilus torridus (strain ATCC 700027 / DSM 9790 / JCM 10055 / NBRC 100828 / KAW 2/3)).